The sequence spans 541 residues: uncharacterized protein (541 aa).

The N-terminal stretch at 1 to 17 (MSFSATILFSPPSGSEA) is a signal peptide. Disordered stretches follow at residues 28–47 (TSQG…TPIT) and 103–138 (GKVC…SNSL). Residues 103-116 (GKVCTADEDRESRA) are compositionally biased toward basic and acidic residues. Threonine 118 carries the post-translational modification Phosphothreonine. Glycyl lysine isopeptide (Lys-Gly) (interchain with G-Cter in SUMO2) cross-links involve residues lysine 128 and lysine 223. Serine 226 carries the post-translational modification Phosphoserine. Polar residues predominate over residues 232 to 243 (AIQRASSETGPE). Residues 232-254 (AIQRASSETGPESGTKLPATRPE) are disordered. Residues serine 286 and serine 429 each carry the phosphoserine modification. The interval 494–526 (YNPNFQEDEGGGNEKGPVSPSYDQPHKTSCPDL) is disordered.

The protein resides in the secreted. This is an uncharacterized protein from Mus musculus (Mouse).